The following is a 100-amino-acid chain: Co-chaperonin GroES (100 aa).

The protein belongs to the GroES chaperonin family. As to quaternary structure, heptamer of 7 subunits arranged in a ring. Interacts with the chaperonin GroEL.

It is found in the cytoplasm. In terms of biological role, together with the chaperonin GroEL, plays an essential role in assisting protein folding. The GroEL-GroES system forms a nano-cage that allows encapsulation of the non-native substrate proteins and provides a physical environment optimized to promote and accelerate protein folding. GroES binds to the apical surface of the GroEL ring, thereby capping the opening of the GroEL channel. The chain is Co-chaperonin GroES from Rhodothermus marinus (Rhodothermus obamensis).